A 391-amino-acid chain; its full sequence is Zinc finger protein 414 (391 aa).

Residues 1–110 form a disordered region; that stretch reads MDEEPSGPSL…RRPPPGKQIP (110 aa). Residues 84 to 93 are compositionally biased toward polar residues; it reads GPTSTVSGTS. 3 consecutive C2H2-type zinc fingers follow at residues 109-133, 145-169, and 176-201; these read IPCS…LRTH, FRCS…GKLH, and FKCE…CAEH. Disordered regions lie at residues 201 to 243, 274 to 312, and 344 to 391; these read HAQS…LEPF, LAAA…SGHA, and HLED…FSPL. The segment covering 214-226 has biased composition (basic and acidic residues); sequence LDRESPASERPPE. A compositionally biased stretch (pro residues) spans 227–236; the sequence is SDPAPAPGLP. The span at 274–286 shows a compositional bias: low complexity; that stretch reads LAAAPGPPASSAA. The C2H2-type 4 zinc finger occupies 326–348; the sequence is YSCMQCAFSTASRPAMTLHLEDH. The span at 353-372 shows a compositional bias: pro residues; that stretch reads PAAPAPGQPRPDAPADPAPL.

The protein belongs to the krueppel C2H2-type zinc-finger protein family.

Its subcellular location is the nucleus. Functionally, may be involved in transcriptional regulation. This chain is Zinc finger protein 414 (ZNF414), found in Bos taurus (Bovine).